Here is a 367-residue protein sequence, read N- to C-terminus: Peptide chain release factor 2 (367 aa).

Position 254 is an N5-methylglutamine (Gln-254).

The protein belongs to the prokaryotic/mitochondrial release factor family. Methylated by PrmC. Methylation increases the termination efficiency of RF2.

It is found in the cytoplasm. In terms of biological role, peptide chain release factor 2 directs the termination of translation in response to the peptide chain termination codons UGA and UAA. This Bordetella bronchiseptica (strain ATCC BAA-588 / NCTC 13252 / RB50) (Alcaligenes bronchisepticus) protein is Peptide chain release factor 2.